The sequence spans 277 residues: Ribosomal RNA small subunit methyltransferase A (277 aa).

Residues asparagine 18, leucine 20, glycine 45, glutamate 66, aspartate 89, and asparagine 110 each contribute to the S-adenosyl-L-methionine site.

Belongs to the class I-like SAM-binding methyltransferase superfamily. rRNA adenine N(6)-methyltransferase family. RsmA subfamily.

The protein resides in the cytoplasm. It catalyses the reaction adenosine(1518)/adenosine(1519) in 16S rRNA + 4 S-adenosyl-L-methionine = N(6)-dimethyladenosine(1518)/N(6)-dimethyladenosine(1519) in 16S rRNA + 4 S-adenosyl-L-homocysteine + 4 H(+). Specifically dimethylates two adjacent adenosines (A1518 and A1519) in the loop of a conserved hairpin near the 3'-end of 16S rRNA in the 30S particle. May play a critical role in biogenesis of 30S subunits. The chain is Ribosomal RNA small subunit methyltransferase A from Cupriavidus taiwanensis (strain DSM 17343 / BCRC 17206 / CCUG 44338 / CIP 107171 / LMG 19424 / R1) (Ralstonia taiwanensis (strain LMG 19424)).